The following is a 66-amino-acid chain: ATP synthase F(0) complex subunit 8 (66 aa).

A helical transmembrane segment spans residues 8 to 24 (IWLLAVVIVLTTLMIFL). The residue at position 54 (Lys54) is an N6-acetyllysine; alternate. The residue at position 54 (Lys54) is an N6-succinyllysine; alternate. Residue Lys57 is modified to N6-acetyllysine.

The protein belongs to the ATPase protein 8 family. As to quaternary structure, component of the ATP synthase complex composed at least of ATP5F1A/subunit alpha, ATP5F1B/subunit beta, ATP5MC1/subunit c (homooctomer), MT-ATP6/subunit a, MT-ATP8/subunit 8, ATP5ME/subunit e, ATP5MF/subunit f, ATP5MG/subunit g, ATP5MK/subunit k, ATP5MJ/subunit j, ATP5F1C/subunit gamma, ATP5F1D/subunit delta, ATP5F1E/subunit epsilon, ATP5PF/subunit F6, ATP5PB/subunit b, ATP5PD/subunit d, ATP5PO/subunit OSCP. ATP synthase complex consists of a soluble F(1) head domain (subunits alpha(3) and beta(3)) - the catalytic core - and a membrane F(0) domain - the membrane proton channel (subunits c, a, 8, e, f, g, k and j). These two domains are linked by a central stalk (subunits gamma, delta, and epsilon) rotating inside the F1 region and a stationary peripheral stalk (subunits F6, b, d, and OSCP). Interacts with PRICKLE3.

Its subcellular location is the mitochondrion membrane. Its function is as follows. Subunit 8, of the mitochondrial membrane ATP synthase complex (F(1)F(0) ATP synthase or Complex V) that produces ATP from ADP in the presence of a proton gradient across the membrane which is generated by electron transport complexes of the respiratory chain. ATP synthase complex consist of a soluble F(1) head domain - the catalytic core - and a membrane F(1) domain - the membrane proton channel. These two domains are linked by a central stalk rotating inside the F(1) region and a stationary peripheral stalk. During catalysis, ATP synthesis in the catalytic domain of F(1) is coupled via a rotary mechanism of the central stalk subunits to proton translocation. In vivo, can only synthesize ATP although its ATP hydrolase activity can be activated artificially in vitro. Part of the complex F(0) domain. In Loxodonta africana (African elephant), this protein is ATP synthase F(0) complex subunit 8.